Here is a 1681-residue protein sequence, read N- to C-terminus: Probable clathrin heavy chain 1 (1681 aa).

WD40-like repeat stretches follow at residues 22–65 (NITF…RPIS), 66–105 (ADSV…NVED), 106–147 (VVYW…QSLA), 148–193 (GTQI…QPIE), 194–255 (GHAA…ADTA), 256–299 (GDFP…ISTD), and 300–328 (TVFV…VSID). CHCR repeat units follow at residues 539–685 (SENG…QVVV), 688–830 (ASKY…SEDA), 835–974 (IINT…QLID), 981–1126 (LSET…VKEA), 1130–1271 (FIKA…FRLA), 1276–1422 (LHIV…LLLN), and 1425–1568 (LTVL…YDCF). The segment covering 1616–1628 (ERSEHERKEEKAE) has biased composition (basic and acidic residues). Residues 1616 to 1635 (ERSEHERKEEKAEQQQNNGM) form a disordered region.

Belongs to the clathrin heavy chain family. As to quaternary structure, clathrin triskelions, composed of 3 heavy chains and 3 light chains, are the basic subunits of the clathrin coat. May interact with beta arrestin arr-1.

It localises to the cytoplasmic vesicle membrane. The protein resides in the membrane. The protein localises to the coated pit. Its function is as follows. Clathrin is the major protein of the polyhedral coat of coated pits and vesicles. May play a role in yolk protein clatherin-mediated endocytosis by oocytes during oogenesis. This chain is Probable clathrin heavy chain 1 (chc-1), found in Caenorhabditis elegans.